Here is a 284-residue protein sequence, read N- to C-terminus: MACTENGLAGHSHSPIIVPVDKNRSKETCHNVQLRSLSSMLKDDEDDADVWTRPPVSLRPPFNVPRTGARIPQNPRAPRHPLTLTPAIEEESLATAEINSSEGLESQSQKGHDSINMSQEFSGSPMALMIGGPRVGSRVLERSGNNSKPYIPVPRSQGFFPPRGSQSRGPPYIPTLRSGIMMEVTPGNARMANRGNMAHVSFPLGSPRHPMDNWQQSPSLPLSPSITGLPCSSAHCFLPPQAPAFNPFPVMPTAFASPLRFGPPLLPYVFHYNTGAMYPPPYLN.

Disordered stretches follow at residues 59-80 (RPPFNVPRTGARIPQNPRAPRH), 97-119 (EINSSEGLESQSQKGHDSINMSQ), and 143-171 (SGNNSKPYIPVPRSQGFFPPRGSQSRGPP).

This is Proline-rich protein 32 (Prr32) from Mus musculus (Mouse).